We begin with the raw amino-acid sequence, 178 residues long: uncharacterized protein (178 aa).

Residues 1 to 19 (MKKLLIVTMLFTLALSAQA) form the signal peptide.

It belongs to the opacity porin family.

This is an uncharacterized protein from Haemophilus influenzae (strain ATCC 51907 / DSM 11121 / KW20 / Rd).